Reading from the N-terminus, the 102-residue chain is Urease subunit beta (102 aa).

Belongs to the urease beta subunit family. In terms of assembly, heterotrimer of UreA (gamma), UreB (beta) and UreC (alpha) subunits. Three heterotrimers associate to form the active enzyme.

Its subcellular location is the cytoplasm. It catalyses the reaction urea + 2 H2O + H(+) = hydrogencarbonate + 2 NH4(+). Its pathway is nitrogen metabolism; urea degradation; CO(2) and NH(3) from urea (urease route): step 1/1. In Acinetobacter baumannii (strain AB307-0294), this protein is Urease subunit beta.